A 352-amino-acid chain; its full sequence is Threonine synthase (352 aa).

N6-(pyridoxal phosphate)lysine is present on Lys-59. Residues Asn-85, 185-189 (GNAGN), and Thr-314 each bind pyridoxal 5'-phosphate.

Belongs to the threonine synthase family. Pyridoxal 5'-phosphate serves as cofactor.

The enzyme catalyses O-phospho-L-homoserine + H2O = L-threonine + phosphate. The protein operates within amino-acid biosynthesis; L-threonine biosynthesis; L-threonine from L-aspartate: step 5/5. In terms of biological role, catalyzes the gamma-elimination of phosphate from L-phosphohomoserine and the beta-addition of water to produce L-threonine. The sequence is that of Threonine synthase (thrC) from Bacillus subtilis (strain 168).